The following is a 262-amino-acid chain: MIDKTAFIHPTAIVEEGAVIGANAHIGPFCIVGPHVVIGEGTVLKSHVVVNGHTIIGRDNEIYQFASIGEVNQDLKYAGEPTRLEIGDRNRIRESVTIHRGTVQGGGLTKVGSDNLFMVNAHIAHDCTVGSRCILANNATLAGHVSVDDFAIIGGMTAVHQFCIIGAHVMIGGCSGVAQDVPPYVIAQGNHATPFGVNIEGLKRRGFSREAITAIRNAYKLMYRSGKTLEEAKPEVAALAEQHPEVKAFTEFFERSTRGLIR.

The protein belongs to the transferase hexapeptide repeat family. LpxA subfamily. In terms of assembly, homotrimer.

It localises to the cytoplasm. It carries out the reaction a (3R)-hydroxyacyl-[ACP] + UDP-N-acetyl-alpha-D-glucosamine = a UDP-3-O-[(3R)-3-hydroxyacyl]-N-acetyl-alpha-D-glucosamine + holo-[ACP]. It participates in glycolipid biosynthesis; lipid IV(A) biosynthesis; lipid IV(A) from (3R)-3-hydroxytetradecanoyl-[acyl-carrier-protein] and UDP-N-acetyl-alpha-D-glucosamine: step 1/6. Its function is as follows. Involved in the biosynthesis of lipid A, a phosphorylated glycolipid that anchors the lipopolysaccharide to the outer membrane of the cell. This is Acyl-[acyl-carrier-protein]--UDP-N-acetylglucosamine O-acyltransferase from Enterobacter sp. (strain 638).